Here is a 677-residue protein sequence, read N- to C-terminus: UvrABC system protein B (677 aa).

A Helicase ATP-binding domain is found at 25–412 (QGVNGGERYQ…GGEVAQQVIR (388 aa)). Residue 38–45 (GATGTGKT) participates in ATP binding. A Beta-hairpin motif is present at residues 91–114 (YYDYYQPEAYVPVSDTYIAKTASI). Positions 429–591 (QVDDLLGEIR…IVPTAAGKKA (163 aa)) constitute a Helicase C-terminal domain. Positions 639 to 674 (PELIDQLEGKMKEAAKKLDFEDAANLRDRIKQLRQK) constitute a UVR domain.

This sequence belongs to the UvrB family. In terms of assembly, forms a heterotetramer with UvrA during the search for lesions. Interacts with UvrC in an incision complex.

It is found in the cytoplasm. Functionally, the UvrABC repair system catalyzes the recognition and processing of DNA lesions. A damage recognition complex composed of 2 UvrA and 2 UvrB subunits scans DNA for abnormalities. Upon binding of the UvrA(2)B(2) complex to a putative damaged site, the DNA wraps around one UvrB monomer. DNA wrap is dependent on ATP binding by UvrB and probably causes local melting of the DNA helix, facilitating insertion of UvrB beta-hairpin between the DNA strands. Then UvrB probes one DNA strand for the presence of a lesion. If a lesion is found the UvrA subunits dissociate and the UvrB-DNA preincision complex is formed. This complex is subsequently bound by UvrC and the second UvrB is released. If no lesion is found, the DNA wraps around the other UvrB subunit that will check the other stand for damage. In Parasynechococcus marenigrum (strain WH8102), this protein is UvrABC system protein B.